The chain runs to 340 residues: Holliday junction branch migration complex subunit RuvB (340 aa).

The tract at residues 1-181 is large ATPase domain (RuvB-L); the sequence is MDRIVEIEKA…FGMQFRLNFY (181 aa). Residues L20, R21, G62, K65, T66, T67, 128–130, R171, Y181, and R218 contribute to the ATP site; that span reads EDF. Position 66 (T66) interacts with Mg(2+). A small ATPAse domain (RuvB-S) region spans residues 182–252; the sequence is TSDELAKIVQ…RAKSSLDALG (71 aa). A head domain (RuvB-H) region spans residues 255-340; it reads DLGFDEMDLK…TQKGLFDEDQ (86 aa). The DNA site is built by R309 and R314.

This sequence belongs to the RuvB family. In terms of assembly, homohexamer. Forms an RuvA(8)-RuvB(12)-Holliday junction (HJ) complex. HJ DNA is sandwiched between 2 RuvA tetramers; dsDNA enters through RuvA and exits via RuvB. An RuvB hexamer assembles on each DNA strand where it exits the tetramer. Each RuvB hexamer is contacted by two RuvA subunits (via domain III) on 2 adjacent RuvB subunits; this complex drives branch migration. In the full resolvosome a probable DNA-RuvA(4)-RuvB(12)-RuvC(2) complex forms which resolves the HJ.

The protein localises to the cytoplasm. The enzyme catalyses ATP + H2O = ADP + phosphate + H(+). In terms of biological role, the RuvA-RuvB-RuvC complex processes Holliday junction (HJ) DNA during genetic recombination and DNA repair, while the RuvA-RuvB complex plays an important role in the rescue of blocked DNA replication forks via replication fork reversal (RFR). RuvA specifically binds to HJ cruciform DNA, conferring on it an open structure. The RuvB hexamer acts as an ATP-dependent pump, pulling dsDNA into and through the RuvAB complex. RuvB forms 2 homohexamers on either side of HJ DNA bound by 1 or 2 RuvA tetramers; 4 subunits per hexamer contact DNA at a time. Coordinated motions by a converter formed by DNA-disengaged RuvB subunits stimulates ATP hydrolysis and nucleotide exchange. Immobilization of the converter enables RuvB to convert the ATP-contained energy into a lever motion, pulling 2 nucleotides of DNA out of the RuvA tetramer per ATP hydrolyzed, thus driving DNA branch migration. The RuvB motors rotate together with the DNA substrate, which together with the progressing nucleotide cycle form the mechanistic basis for DNA recombination by continuous HJ branch migration. Branch migration allows RuvC to scan DNA until it finds its consensus sequence, where it cleaves and resolves cruciform DNA. In Campylobacter hominis (strain ATCC BAA-381 / DSM 21671 / CCUG 45161 / LMG 19568 / NCTC 13146 / CH001A), this protein is Holliday junction branch migration complex subunit RuvB.